We begin with the raw amino-acid sequence, 311 residues long: Olfactory receptor 6C3 (311 aa).

Over 1-22 (MNHTMVTEFVLLGLSDDPDLQI) the chain is Extracellular. The N-linked (GlcNAc...) asparagine glycan is linked to N2. Residues 23 to 43 (VIFLFLFITYILSVTGNLTII) traverse the membrane as a helical segment. Residues 44–51 (TLTFVDSH) lie on the Cytoplasmic side of the membrane. The helical transmembrane segment at 52-72 (LQTPMYFFLRNFSFLEISFTT) threads the bilayer. Topologically, residues 73–96 (VCIPRFLGAIITRNKTISYNNCAA) are extracellular. A disulfide bridge links C94 with C186. Residues 97-117 (QLFFFIFMGVTEFYILTAMSY) traverse the membrane as a helical segment. Residues 118-136 (DRYVAICKPLHYTSIMNRK) lie on the Cytoplasmic side of the membrane. Residues 137–157 (LCTLLVLCAWLSGFLTIFPPL) traverse the membrane as a helical segment. The Extracellular portion of the chain corresponds to 158–194 (MLLLQLDYCASNVIDHFACDYFPLLQLSCSDTWLLEV). The chain crosses the membrane as a helical span at residues 195–214 (IGFYFALVTLLFTLALVILS). Residues 215 to 234 (YMYIIRTILRIPSASQRKKA) are Cytoplasmic-facing. The chain crosses the membrane as a helical span at residues 235–255 (FSTCSSHMIVISISYGSCIFM). The Extracellular segment spans residues 256 to 268 (YANPSAKEKASLT). Residues 269-289 (KGIAILNTSVAPMLNPFIYTL) traverse the membrane as a helical segment. The Cytoplasmic segment spans residues 290-311 (RNQQVKQAFKNVVHKVVFYANQ).

It belongs to the G-protein coupled receptor 1 family.

The protein resides in the cell membrane. Odorant receptor. The protein is Olfactory receptor 6C3 (OR6C3) of Homo sapiens (Human).